The chain runs to 394 residues: Protein TsgA homolog (394 aa).

The next 12 helical transmembrane spans lie at 11-31, 51-71, 76-96, 101-121, 134-154, 160-180, 206-226, 246-266, 274-294, 297-317, 334-354, and 363-383; these read WISF…GMVM, FLNT…EIIP, LVFG…GHNL, ACMF…TFLI, LLFT…IAAT, VAWY…FILT, IGVL…LGFI, GLVS…SVAL, IVTV…SSQQ, MLSM…TTLI, FILT…GPIV, and LATA…LGFV.

It belongs to the major facilitator superfamily. TsgA family.

It is found in the cell inner membrane. The protein is Protein TsgA homolog of Edwardsiella ictaluri (strain 93-146).